Reading from the N-terminus, the 197-residue chain is Fucoxanthin-chlorophyll a-c binding protein D, chloroplastic (197 aa).

Residues methionine 1–methionine 31 constitute a chloroplast transit peptide. Helical transmembrane passes span isoleucine 73–isoleucine 94, proline 114–methionine 133, and glycine 174–proline 196.

This sequence belongs to the fucoxanthin chlorophyll protein family. As to quaternary structure, the LHC complex of chromophytic algae is composed of fucoxanthin, chlorophyll A and C bound non-covalently by fucoxanthin chlorophyll proteins (FCPs). The ratio of the pigments in LHC; fucoxanthin: chlorophyll C: chlorophyll A; (0.6-1): (0.1-0.3): (1).

Its subcellular location is the plastid. It localises to the chloroplast thylakoid membrane. The light-harvesting complex (LHC) functions as a light receptor, it captures and delivers excitation energy to photosystems with which it is closely associated. Energy is transferred from the carotenoid and chlorophyll C (or B) to chlorophyll A and the photosynthetic reaction centers where it is used to synthesize ATP and reducing power. In Phaeodactylum tricornutum (Diatom), this protein is Fucoxanthin-chlorophyll a-c binding protein D, chloroplastic (FCPD).